The chain runs to 929 residues: Isoleucine--tRNA ligase (929 aa).

Positions 57–67 (PYANGNIHVGH) match the 'HIGH' region motif. Glu554 provides a ligand contact to L-isoleucyl-5'-AMP. The 'KMSKS' region motif lies at 595 to 599 (KMSKS). Lys598 is an ATP binding site. Zn(2+) is bound by residues Cys888, Cys891, Cys908, and Cys911.

This sequence belongs to the class-I aminoacyl-tRNA synthetase family. IleS type 1 subfamily. Monomer. Requires Zn(2+) as cofactor.

It localises to the cytoplasm. The catalysed reaction is tRNA(Ile) + L-isoleucine + ATP = L-isoleucyl-tRNA(Ile) + AMP + diphosphate. Functionally, catalyzes the attachment of isoleucine to tRNA(Ile). As IleRS can inadvertently accommodate and process structurally similar amino acids such as valine, to avoid such errors it has two additional distinct tRNA(Ile)-dependent editing activities. One activity is designated as 'pretransfer' editing and involves the hydrolysis of activated Val-AMP. The other activity is designated 'posttransfer' editing and involves deacylation of mischarged Val-tRNA(Ile). This Streptococcus thermophilus (strain ATCC BAA-491 / LMD-9) protein is Isoleucine--tRNA ligase.